We begin with the raw amino-acid sequence, 282 residues long: NFU1 iron-sulfur cluster scaffold homolog, mitochondrial (282 aa).

The N-terminal 27 residues, 1–27, are a transit peptide targeting the mitochondrion; that stretch reads MSKLLSYTARIILRNSRITVRQLVRGF. A nifU region spans residues 178–246; sequence IKELLDTRIR…IPEVESVEQV (69 aa). [4Fe-4S] cluster-binding residues include cysteine 215 and cysteine 218. The disordered stretch occupies residues 263–282; the sequence is KNLKQKEPAGAPVGIGGGPN.

It belongs to the NifU family.

Its subcellular location is the mitochondrion. In terms of biological role, molecular scaffold for [Fe-S] cluster assembly of mitochondrial iron-sulfur proteins. In Drosophila persimilis (Fruit fly), this protein is NFU1 iron-sulfur cluster scaffold homolog, mitochondrial.